Reading from the N-terminus, the 332-residue chain is Small ribosomal subunit biogenesis GTPase RsgA (332 aa).

In terms of domain architecture, CP-type G spans 103-259 (RQQLIAANLD…LIDTPGMREL (157 aa)). GTP-binding positions include 148-151 (TKVD) and 201-209 (GSSGAGKST). Zn(2+) contacts are provided by C281, C286, H288, and C294.

The protein belongs to the TRAFAC class YlqF/YawG GTPase family. RsgA subfamily. As to quaternary structure, monomer. Associates with 30S ribosomal subunit, binds 16S rRNA. Requires Zn(2+) as cofactor.

It is found in the cytoplasm. In terms of biological role, one of several proteins that assist in the late maturation steps of the functional core of the 30S ribosomal subunit. Helps release RbfA from mature subunits. May play a role in the assembly of ribosomal proteins into the subunit. Circularly permuted GTPase that catalyzes slow GTP hydrolysis, GTPase activity is stimulated by the 30S ribosomal subunit. This is Small ribosomal subunit biogenesis GTPase RsgA from Xylella fastidiosa (strain M23).